Consider the following 333-residue polypeptide: Lipoyl synthase (333 aa).

The segment at 1-29 is disordered; the sequence is MTDSAAGATEVATPATPSNKPYDATAKQK. Residues Cys80, Cys85, Cys91, Cys106, Cys110, Cys113, and Ser320 each contribute to the [4Fe-4S] cluster site. The region spanning 91 to 309 is the Radical SAM core domain; the sequence is CFGKGTATFM…EEKAYEMGFT (219 aa).

The protein belongs to the radical SAM superfamily. Lipoyl synthase family. The cofactor is [4Fe-4S] cluster.

It localises to the cytoplasm. The catalysed reaction is [[Fe-S] cluster scaffold protein carrying a second [4Fe-4S](2+) cluster] + N(6)-octanoyl-L-lysyl-[protein] + 2 oxidized [2Fe-2S]-[ferredoxin] + 2 S-adenosyl-L-methionine + 4 H(+) = [[Fe-S] cluster scaffold protein] + N(6)-[(R)-dihydrolipoyl]-L-lysyl-[protein] + 4 Fe(3+) + 2 hydrogen sulfide + 2 5'-deoxyadenosine + 2 L-methionine + 2 reduced [2Fe-2S]-[ferredoxin]. It functions in the pathway protein modification; protein lipoylation via endogenous pathway; protein N(6)-(lipoyl)lysine from octanoyl-[acyl-carrier-protein]: step 2/2. Its function is as follows. Catalyzes the radical-mediated insertion of two sulfur atoms into the C-6 and C-8 positions of the octanoyl moiety bound to the lipoyl domains of lipoate-dependent enzymes, thereby converting the octanoylated domains into lipoylated derivatives. The chain is Lipoyl synthase from Ralstonia pickettii (strain 12J).